A 189-amino-acid chain; its full sequence is Elongation factor P (189 aa).

It belongs to the elongation factor P family.

It localises to the cytoplasm. It functions in the pathway protein biosynthesis; polypeptide chain elongation. Its function is as follows. Involved in peptide bond synthesis. Stimulates efficient translation and peptide-bond synthesis on native or reconstituted 70S ribosomes in vitro. Probably functions indirectly by altering the affinity of the ribosome for aminoacyl-tRNA, thus increasing their reactivity as acceptors for peptidyl transferase. The polypeptide is Elongation factor P (Sinorhizobium fredii (strain NBRC 101917 / NGR234)).